Consider the following 116-residue polypeptide: Vesicle-associated membrane protein 2 (116 aa).

Residues 1–33 (MSATAATAPPAAPAGEGGPPAPPPNLTSNRRLQ) are disordered. Ser2 carries the N-acetylserine modification. Residues 2–94 (SATAATAPPA…KRKYWWKNLK (93 aa)) lie on the Cytoplasmic side of the membrane. The v-SNARE coiled-coil homology domain maps to 31–91 (RLQQTQAQVD…AKLKRKYWWK (61 aa)). Residues 92 to 116 (NLKMMIILGVICAIILIIIIVYFST) are required for interaction with SEPT8. Residues 95-114 (MMIILGVICAIILIIIIVYF) traverse the membrane as a helical; Anchor for type IV membrane protein segment. Residues 115–116 (ST) are Vesicular-facing.

This sequence belongs to the synaptobrevin family. As to quaternary structure, part of the SNARE core complex containing SNAP25, VAMP2 and STX1A; this complex constitutes the basic catalytic machinery of the complex neurotransmitter release apparatus. Recruited to the SNARE complex following binding of the SNARE complex component STX1A to STXBP1. This complex binds to CPLX1. Interacts with POPDC1 and STX4. Interacts with VAPA and VAPB. Interacts with WDFY2, PRKCZ and PRKCI. Forms a complex with WDFY2 and PRKCZ. Interacts (via N-terminus) with KCNB1 (via N-terminus and C-terminus); stimulates the channel inactivation rate of KCNB1. Interacts with SEPT8; the interaction inhibits interaction of VAMP2 with SYP. Interacts with SYP; the interaction is inhibited by interaction with SEPT8. Interacts with PICALM. Interacts with alpha-synuclein/SNCA. Interacts with STX3. In terms of processing, phosphorylated by PRKCZ in vitro and this phosphorylation is increased in the presence of WDFY2. Post-translationally, (Microbial infection) Targeted and hydrolyzed by C.botulinum neurotoxin type B (BoNT/B, botB) which hydrolyzes the 76-Gln-|-Phe-77 bond and probably inhibits neurotransmitter release. (Microbial infection) Targeted and hydrolyzed by C.botulinum neurotoxin type D (BoNT/D, botD) which probably hydrolyzes the 59-Lys-|-Leu-60 bond and inhibits neurotransmitter release. Note that humans are not known to be infected by C.botulinum type D. In terms of processing, (Microbial infection) Targeted and hydrolyzed by C.botulinum neurotoxin type F (BoNT/F, botF) which hydrolyzes the 58-Gln-|-Lys-59 bond and probably inhibits neurotransmitter release. Post-translationally, (Microbial infection) Targeted and hydrolyzed by C.tetani tetanus toxin (tetX) which hydrolyzes the 76-Gln-|-Phe-77 bond and probably inhibits neurotransmitter release. In terms of tissue distribution, nervous system and skeletal muscle.

Its subcellular location is the cytoplasmic vesicle. The protein localises to the secretory vesicle. It is found in the synaptic vesicle membrane. The protein resides in the cell membrane. Involved in the targeting and/or fusion of transport vesicles to their target membrane. Major SNARE protein of synaptic vesicles which mediates fusion of synaptic vesicles to release neurotransmitters. Essential for fast vesicular exocytosis and activity-dependent neurotransmitter release as well as fast endocytosis that mediates rapid reuse of synaptic vesicles. Modulates the gating characteristics of the delayed rectifier voltage-dependent potassium channel KCNB1. The polypeptide is Vesicle-associated membrane protein 2 (Homo sapiens (Human)).